The following is a 381-amino-acid chain: Guanine nucleotide-binding protein G(olf) subunit alpha (381 aa).

The interval methionine 1–asparagine 25 is disordered. Glycine 2 is lipidated: N-palmitoyl glycine. Cysteine 3 carries the S-palmitoyl cysteine lipid modification. Positions threonine 10–asparagine 25 are enriched in basic and acidic residues. The G-alpha domain maps to alanine 41–leucine 381. Residues arginine 44–threonine 57 are G1 motif. GTP contacts are provided by glutamate 52, serine 53, glycine 54, lysine 55, serine 56, and threonine 57. Serine 56 is a Mg(2+) binding site. The residue at position 178 (threonine 178) is a Phosphothreonine. The segment at aspartate 183 to threonine 191 is G2 motif. Leucine 185 and arginine 186 together coordinate GTP. Arginine 188 carries the ADP-ribosylarginine; by cholera toxin modification. GTP is bound at residue threonine 191. Residues threonine 191 and aspartate 210 each contribute to the Mg(2+) site. Residues phenylalanine 206–arginine 215 are G3 motif. GTP is bound by residues glycine 213, asparagine 279, lysine 280, aspartate 282, and alanine 353. The tract at residues isoleucine 275–aspartate 282 is G4 motif. The segment at threonine 351–threonine 356 is G5 motif.

It belongs to the G-alpha family. G(s) subfamily. In terms of assembly, g proteins are composed of 3 units; alpha, beta and gamma. The alpha chain contains the guanine nucleotide binding site. Interacts with GAS2L2. Interacts (GDP-bound form) with RIC8B (via C-terminus); promoting GNAL folding and association with the plasma membrane. Detected in olfactory neuroepithelium, brain, testis, and to a lower extent in retina, lung alveoli, spleen. Trace amounts where seen in kidney, adrenal gland and liver. Found to be expressed in all the insulinomas examined.

It is found in the cell membrane. The catalysed reaction is GTP + H2O = GDP + phosphate + H(+). Guanine nucleotide-binding protein (G protein) involved as transducer in olfactory signal transduction controlled by G protein-coupled receptors (GPCRs). Contains the guanine nucleotide binding site and alternates between an active, GTP-bound state and an inactive, GDP-bound state. Signaling by an activated GPCR promotes GDP release and GTP binding. The alpha subunit has a low GTPase activity that converts bound GTP to GDP, thereby terminating the signal. Both GDP release and GTP hydrolysis are modulated by numerous regulatory proteins. GNAL/G(olf) alpha specifically mediates olfactory signal transduction within the olfactory neuroepithelium and the basal ganglia following GPCRs activation. Acts by promoting the specific activation of adenylyl cyclase ADCY3, resulting in increased levels of the signaling molecule cAMP. In Homo sapiens (Human), this protein is Guanine nucleotide-binding protein G(olf) subunit alpha.